The following is a 114-amino-acid chain: Cytochrome c2 (114 aa).

The residue at position 1 (Gln1) is a Pyrrolidone carboxylic acid. Heme c-binding residues include Cys13, Cys16, His17, and Met93.

This sequence belongs to the cytochrome c family. Post-translationally, binds 1 heme c group covalently per subunit.

Its function is as follows. Cytochrome c2 is found mainly in purple, non-sulfur, photosynthetic bacteria where it functions as the electron donor to the oxidized bacteriochlorophyll in the photophosphorylation pathway. However, it may also have a role in the respiratory chain and is found in some non-photosynthetic bacteria. The protein is Cytochrome c2 (cycA) of Rhodopseudomonas palustris.